A 397-amino-acid chain; its full sequence is Pectate lyase 2 (397 aa).

Positions 1-25 are cleaved as a signal peptide; sequence MGIKQCCYILYFTLALVALLQPVRS. An N-linked (GlcNAc...) asparagine glycan is attached at N37. The cysteines at positions 54 and 71 are disulfide-linked. D194, D218, and D222 together coordinate Ca(2+). The active site involves R274.

Belongs to the polysaccharide lyase 1 family. Amb a subfamily. Monomer. It depends on Ca(2+) as a cofactor. The N-terminus is blocked. Pollen and flowers.

The enzyme catalyses Eliminative cleavage of (1-&gt;4)-alpha-D-galacturonan to give oligosaccharides with 4-deoxy-alpha-D-galact-4-enuronosyl groups at their non-reducing ends.. The protein operates within glycan metabolism; pectin degradation; 2-dehydro-3-deoxy-D-gluconate from pectin: step 2/5. Functionally, has pectate lyase activity. The polypeptide is Pectate lyase 2 (Ambrosia artemisiifolia (Common ragweed)).